Reading from the N-terminus, the 147-residue chain is Ribonuclease pancreatic gamma-type (147 aa).

A signal peptide spans 1 to 25; that stretch reads MGLEKSFLLFSLLVLVLGWVQPSLG. Lysine 35 and arginine 38 together coordinate substrate. The active-site Proton acceptor is histidine 40. Cystine bridges form between cysteine 54-cysteine 112, cysteine 68-cysteine 123, cysteine 86-cysteine 138, and cysteine 93-cysteine 100. Substrate is bound by residues 69–73, lysine 94, and arginine 113; that span reads KPMNT. The active-site Proton donor is the histidine 142.

The protein belongs to the pancreatic ribonuclease family. In terms of assembly, monomer.

The protein localises to the secreted. It carries out the reaction an [RNA] containing cytidine + H2O = an [RNA]-3'-cytidine-3'-phosphate + a 5'-hydroxy-ribonucleotide-3'-[RNA].. It catalyses the reaction an [RNA] containing uridine + H2O = an [RNA]-3'-uridine-3'-phosphate + a 5'-hydroxy-ribonucleotide-3'-[RNA].. In terms of biological role, endonuclease that catalyzes the cleavage of RNA on the 3' side of pyrimidine nucleotides. Acts on single-stranded and double-stranded RNA. This chain is Ribonuclease pancreatic gamma-type, found in Rattus rattus (Black rat).